Here is a 371-residue protein sequence, read N- to C-terminus: MRKTAILALEDGSYFVGYSFGAEGETGGELVFNTSMTGYQEILTDPSYKGQIVVMTYTQIGNYGVNDEDIESKSVQVNGFVVKEAFFRYSNWRAKKSLDEYLKENNVVGIYGIDTRALVKKIREKGSMKGVISTVEKDPKKLVQKARELPDISEQNLVEEVSAKDIYYWNQGDYDPRRGFLYRENEKPLVAVIDFGVKFNILRRLVSEGAKVVVVPPENAKEAIEKINPDAIFLSNGPGDPERVISGIRLTREYMEKKPIMGICLGCQIIGLALGGKTYKLKFGHHGGNHPVKDLRTGKIEITAQNHNFAIDPESLPEDVEVTHLNLLDNTVEGIKHKHLPIFAVQYHPENSPGPHDSYYLFKEFVKMAQG.

The segment at 1 to 190 (MRKTAILALE…LYRENEKPLV (190 aa)) is CPSase. The L-glutamine site is built by Ser47, Gly237, and Gly239. The Glutamine amidotransferase type-1 domain maps to 189–371 (LVAVIDFGVK…FKEFVKMAQG (183 aa)). The Nucleophile role is filled by Cys264. L-glutamine-binding residues include Leu265, Gln268, Asn306, and Phe309. Active-site residues include His348 and Glu350.

This sequence belongs to the CarA family. Composed of two chains; the small (or glutamine) chain promotes the hydrolysis of glutamine to ammonia, which is used by the large (or ammonia) chain to synthesize carbamoyl phosphate. Tetramer of heterodimers (alpha,beta)4.

It carries out the reaction hydrogencarbonate + L-glutamine + 2 ATP + H2O = carbamoyl phosphate + L-glutamate + 2 ADP + phosphate + 2 H(+). The enzyme catalyses L-glutamine + H2O = L-glutamate + NH4(+). The protein operates within amino-acid biosynthesis; L-arginine biosynthesis; carbamoyl phosphate from bicarbonate: step 1/1. It participates in pyrimidine metabolism; UMP biosynthesis via de novo pathway; (S)-dihydroorotate from bicarbonate: step 1/3. Functionally, small subunit of the glutamine-dependent carbamoyl phosphate synthetase (CPSase). CPSase catalyzes the formation of carbamoyl phosphate from the ammonia moiety of glutamine, carbonate, and phosphate donated by ATP, constituting the first step of 2 biosynthetic pathways, one leading to arginine and/or urea and the other to pyrimidine nucleotides. The small subunit (glutamine amidotransferase) binds and cleaves glutamine to supply the large subunit with the substrate ammonia. The polypeptide is Carbamoyl phosphate synthase small chain (Aquifex aeolicus (strain VF5)).